Reading from the N-terminus, the 133-residue chain is 6,7-dimethyl-8-ribityllumazine synthase (133 aa).

Residues phenylalanine 11, 43–45 (AYD), and 67–69 (AIV) contribute to the 5-amino-6-(D-ribitylamino)uracil site. Residue 72-73 (DT) participates in (2S)-2-hydroxy-3-oxobutyl phosphate binding. Histidine 75 serves as the catalytic Proton donor. Phenylalanine 100 is a binding site for 5-amino-6-(D-ribitylamino)uracil. Position 115 (arginine 115) interacts with (2S)-2-hydroxy-3-oxobutyl phosphate.

The protein belongs to the DMRL synthase family.

It carries out the reaction (2S)-2-hydroxy-3-oxobutyl phosphate + 5-amino-6-(D-ribitylamino)uracil = 6,7-dimethyl-8-(1-D-ribityl)lumazine + phosphate + 2 H2O + H(+). It functions in the pathway cofactor biosynthesis; riboflavin biosynthesis; riboflavin from 2-hydroxy-3-oxobutyl phosphate and 5-amino-6-(D-ribitylamino)uracil: step 1/2. Its function is as follows. Catalyzes the formation of 6,7-dimethyl-8-ribityllumazine by condensation of 5-amino-6-(D-ribitylamino)uracil with 3,4-dihydroxy-2-butanone 4-phosphate. This is the penultimate step in the biosynthesis of riboflavin. The chain is 6,7-dimethyl-8-ribityllumazine synthase from Halobacterium salinarum (strain ATCC 29341 / DSM 671 / R1).